The sequence spans 188 residues: Protein GrpE (188 aa).

A compositionally biased stretch (basic and acidic residues) spans 1–16 (MEERNEQVVEEVKEAQ). The interval 1 to 31 (MEERNEQVVEEVKEAQVEEAVTPENSEETVE) is disordered.

Belongs to the GrpE family. Homodimer.

The protein localises to the cytoplasm. In terms of biological role, participates actively in the response to hyperosmotic and heat shock by preventing the aggregation of stress-denatured proteins, in association with DnaK and GrpE. It is the nucleotide exchange factor for DnaK and may function as a thermosensor. Unfolded proteins bind initially to DnaJ; upon interaction with the DnaJ-bound protein, DnaK hydrolyzes its bound ATP, resulting in the formation of a stable complex. GrpE releases ADP from DnaK; ATP binding to DnaK triggers the release of the substrate protein, thus completing the reaction cycle. Several rounds of ATP-dependent interactions between DnaJ, DnaK and GrpE are required for fully efficient folding. The sequence is that of Protein GrpE from Bacillus cereus (strain G9842).